The sequence spans 384 residues: Alanine racemase (384 aa).

Catalysis depends on Lys46, which acts as the Proton acceptor; specific for D-alanine. Lys46 carries the N6-(pyridoxal phosphate)lysine modification. Arg144 contacts substrate. The Proton acceptor; specific for L-alanine role is filled by Tyr278. Substrate is bound at residue Met326.

This sequence belongs to the alanine racemase family. Pyridoxal 5'-phosphate is required as a cofactor.

It catalyses the reaction L-alanine = D-alanine. It functions in the pathway amino-acid biosynthesis; D-alanine biosynthesis; D-alanine from L-alanine: step 1/1. Catalyzes the interconversion of L-alanine and D-alanine. May also act on other amino acids. The protein is Alanine racemase (alr) of Frankia casuarinae (strain DSM 45818 / CECT 9043 / HFP020203 / CcI3).